Here is a 96-residue protein sequence, read N- to C-terminus: MPGKIAVEVAYALPKKQYLQRVTLQEGATVEEAIRASGLLELRTDIDLTENKVGIYSRPAKLSDSVHDGDRVEIYRPLIADPKELRRQRAEKSANK.

It belongs to the UPF0125 (RnfH) family.

The sequence is that of UPF0125 protein YfjF (yfjF) from Escherichia coli O157:H7.